The sequence spans 490 residues: Cytochrome P450 2C54 (490 aa).

Residue serine 127 is modified to Phosphoserine. N6-acetyllysine occurs at positions 252 and 375. Cysteine 435 lines the heme pocket.

This sequence belongs to the cytochrome P450 family. The cofactor is heme. In terms of tissue distribution, expressed in liver.

Its subcellular location is the endoplasmic reticulum membrane. It localises to the microsome membrane. The enzyme catalyses an organic molecule + reduced [NADPH--hemoprotein reductase] + O2 = an alcohol + oxidized [NADPH--hemoprotein reductase] + H2O + H(+). Metabolizes arachidonic acid mainly to 12-hydroxyeicosatetraenoic acid (HETE). The polypeptide is Cytochrome P450 2C54 (Mus musculus (Mouse)).